The primary structure comprises 275 residues: MAIVKCKPTSPGRRHVVKVVNSDLHKGKPYAPLLEKKSKSGGRNNNGRITVRHIGGGNKQHYRLIDFKRTKDGIPAKVERLEYDPNRSANIALVLYADGERRYIIAPKGVSAGDMIQSGEDAAIKVGNTLPMRNIPVGSTVHCVELKPGKGAQLARSAGAYAQIIARTGTYVTLRLRSGEMRKVLSECRATLGEVGNSEHMLRELGKAGASRWRGIRPTVRGVVMNPVDHPHGGGEGRTSGGRHPVSPWGVPTKGYKTRSNKRTDKYIVRSRNKK.

Disordered stretches follow at residues 28 to 48 and 223 to 275; these read KPYA…NNGR and VVMN…RNKK.

The protein belongs to the universal ribosomal protein uL2 family. Part of the 50S ribosomal subunit. Forms a bridge to the 30S subunit in the 70S ribosome.

Functionally, one of the primary rRNA binding proteins. Required for association of the 30S and 50S subunits to form the 70S ribosome, for tRNA binding and peptide bond formation. It has been suggested to have peptidyltransferase activity; this is somewhat controversial. Makes several contacts with the 16S rRNA in the 70S ribosome. This Photobacterium profundum (strain SS9) protein is Large ribosomal subunit protein uL2.